The following is a 529-amino-acid chain: Beta-hexosaminidase subunit alpha (529 aa).

Positions 1–22 (MTSSRLWFSLLLAAAFAGRATA) are cleaved as a signal peptide. The propeptide occupies 23–88 (LWPWPQNFQT…PRPYLTGKRH (66 aa)). An intrachain disulfide couples C58 to C104. Residues N115, N157, and N295 are each glycosylated (N-linked (GlcNAc...) asparagine). The cysteines at positions 277 and 328 are disulfide-linked. Catalysis depends on E323, which acts as the Proton donor. The segment at 423-424 (NR) is critical for hydrolysis GM2 gangliosides. A disulfide bond links C505 and C522.

The protein belongs to the glycosyl hydrolase 20 family. As to quaternary structure, there are 3 beta-hexosaminidase isozymes: isozyme A (hexosaminidase A) is a heterodimer composed of one subunit alpha and one subunit beta (chain A and B); isozyme B (hexosaminidase B) is a homodimer of two beta subunits (two chains A and B); isozyme S (hexosaminidase S) is a homodimer of two alpha subunits. The composition of the dimer (isozyme A versus isozyme S) has a significant effect on the substrate specificity of the alpha subunit active site. Post-translationally, N-linked glycan at Asn-115 consists of Man(3)-GlcNAc(2). N-linked glycan at Asn-157 consists of either GlcNAc or GlcNAc(2)-Man(7-9). N-linked glycan at Asn-295 consists of either GlcNAc, GlcNAc-Fuc, or GlcNAc(2)-Man(4).

It is found in the lysosome. The catalysed reaction is Hydrolysis of terminal non-reducing N-acetyl-D-hexosamine residues in N-acetyl-beta-D-hexosaminides.. The enzyme catalyses N-acetyl-beta-D-galactosaminyl-(1-&gt;4)-beta-D-3-sulfogalactosyl-(1-&gt;4)-beta-D-glucosyl-(1&lt;-&gt;1')-ceramide + H2O = a beta-D-3-sulfogalactosyl-(1-&gt;4)-beta-D-glucosyl-(1&lt;-&gt;1')-ceramide + N-acetyl-beta-D-galactosamine. It carries out the reaction a ganglioside GM2 (d18:1(4E)) + H2O = a ganglioside GM3 (d18:1(4E)) + N-acetyl-beta-D-galactosamine. It catalyses the reaction a ganglioside GM2 + H2O = a ganglioside GM3 + N-acetyl-beta-D-galactosamine. The catalysed reaction is beta-D-GalNAc-(1-&gt;4)-alpha-L-IdoA-(1-&gt;3)-beta-D-GalNAc-4-sulfate-(1-&gt;4)-alpha-L-IdoA-(1-&gt;3)-D-GalNAc-4-sulfate + H2O = alpha-L-IdoA-(1-&gt;3)-beta-D-GalNAc-4-sulfate-(1-&gt;4)-alpha-L-IdoA-(1-&gt;3)-D-GalNAc-4-sulfate + N-acetyl-D-galactosamine. The enzyme catalyses N-acetyl-beta-D-6-sulfogalactosaminyl-(1-&gt;4)-alpha-L-iduronyl-(1-&gt;3)-N-acetyl-D-6-sulfogalactosamine + H2O = alpha-L-iduronyl-(1-&gt;3)-N-acetyl-D-6-sulfogalactosamine + N-acetyl-D-6-sulfogalactosamine. Its activity is regulated as follows. Addition of GM2A stimulates the hydrolysis of sulfated glycosphingolipid SM2 and the ganglioside GM2. Hydrolyzes the non-reducing end N-acetyl-D-hexosamine and/or sulfated N-acetyl-D-hexosamine of glycoconjugates, such as the oligosaccharide moieties from proteins and neutral glycolipids, or from certain mucopolysaccharides. The isozyme S is as active as the isozyme A on the anionic bis-sulfated glycans, the chondroitin-6-sulfate trisaccharide (C6S-3), and the dermatan sulfate pentasaccharide, and the sulfated glycosphingolipid SM2. The isozyme B does not hydrolyze each of these substrates, however hydrolyzes efficiently neutral oligosaccharide. Only the isozyme A is responsible for the degradation of GM2 gangliosides in the presence of GM2A. The sequence is that of Beta-hexosaminidase subunit alpha from Homo sapiens (Human).